The sequence spans 505 residues: Maturase K (505 aa).

Belongs to the intron maturase 2 family. MatK subfamily.

It is found in the plastid. The protein resides in the chloroplast. Usually encoded in the trnK tRNA gene intron. Probably assists in splicing its own and other chloroplast group II introns. In Silene otites (Spanish catchfly), this protein is Maturase K.